Reading from the N-terminus, the 556-residue chain is Formate--tetrahydrofolate ligase (556 aa).

65–72 is an ATP binding site; sequence TPAGEGKT.

The protein belongs to the formate--tetrahydrofolate ligase family.

The enzyme catalyses (6S)-5,6,7,8-tetrahydrofolate + formate + ATP = (6R)-10-formyltetrahydrofolate + ADP + phosphate. Its pathway is one-carbon metabolism; tetrahydrofolate interconversion. This is Formate--tetrahydrofolate ligase from Heliobacterium modesticaldum (strain ATCC 51547 / Ice1).